Reading from the N-terminus, the 311-residue chain is Ribonuclease HIII (311 aa).

The region spanning 95–311 is the RNase H type-2 domain; sequence MSIVGSDEVG…NTEKALRLLR (217 aa). Positions 101, 102, and 206 each coordinate a divalent metal cation.

Belongs to the RNase HII family. RnhC subfamily. Requires Mn(2+) as cofactor. Mg(2+) serves as cofactor.

The protein localises to the cytoplasm. It carries out the reaction Endonucleolytic cleavage to 5'-phosphomonoester.. Functionally, endonuclease that specifically degrades the RNA of RNA-DNA hybrids. The sequence is that of Ribonuclease HIII from Bacillus cereus (strain ATCC 14579 / DSM 31 / CCUG 7414 / JCM 2152 / NBRC 15305 / NCIMB 9373 / NCTC 2599 / NRRL B-3711).